Reading from the N-terminus, the 141-residue chain is Nucleoside diphosphate kinase (141 aa).

K11, F59, R87, T93, R104, and N114 together coordinate ATP. H117 serves as the catalytic Pros-phosphohistidine intermediate.

It belongs to the NDK family. As to quaternary structure, homotetramer. Mg(2+) is required as a cofactor.

The protein localises to the cytoplasm. The enzyme catalyses a 2'-deoxyribonucleoside 5'-diphosphate + ATP = a 2'-deoxyribonucleoside 5'-triphosphate + ADP. It carries out the reaction a ribonucleoside 5'-diphosphate + ATP = a ribonucleoside 5'-triphosphate + ADP. Its function is as follows. Major role in the synthesis of nucleoside triphosphates other than ATP. The ATP gamma phosphate is transferred to the NDP beta phosphate via a ping-pong mechanism, using a phosphorylated active-site intermediate. This is Nucleoside diphosphate kinase from Burkholderia cenocepacia (strain HI2424).